The chain runs to 77 residues: Putative snRNP Sm-like protein (77 aa).

Residues 4-76 (RPLDVLNRSL…VVFVSPAPGG (73 aa)) enclose the Sm domain.

The protein belongs to the snRNP Sm proteins family.

The sequence is that of Putative snRNP Sm-like protein from Archaeoglobus fulgidus (strain ATCC 49558 / DSM 4304 / JCM 9628 / NBRC 100126 / VC-16).